Consider the following 523-residue polypeptide: ATP synthase subunit beta, mitochondrial (523 aa).

The transit peptide at 1–19 (MFSRVAKTSFSAVRAAKSQ) directs the protein to the mitochondrion. Residue 201–208 (GGAGVGKT) coordinates ATP.

Belongs to the ATPase alpha/beta chains family. As to quaternary structure, F-type ATPases have 2 components, CF(1) - the catalytic core - and CF(0) - the membrane proton channel. CF(1) has five subunits: alpha(3), beta(3), gamma(1), delta(1), epsilon(1). CF(0) has three main subunits: a, b and c.

The protein resides in the mitochondrion. It is found in the mitochondrion inner membrane. It catalyses the reaction ATP + H2O + 4 H(+)(in) = ADP + phosphate + 5 H(+)(out). Its function is as follows. Mitochondrial membrane ATP synthase (F(1)F(0) ATP synthase or Complex V) produces ATP from ADP in the presence of a proton gradient across the membrane which is generated by electron transport complexes of the respiratory chain. F-type ATPases consist of two structural domains, F(1) - containing the extramembraneous catalytic core, and F(0) - containing the membrane proton channel, linked together by a central stalk and a peripheral stalk. During catalysis, ATP synthesis in the catalytic domain of F(1) is coupled via a rotary mechanism of the central stalk subunits to proton translocation. Subunits alpha and beta form the catalytic core in F(1). Rotation of the central stalk against the surrounding alpha(3)beta(3) subunits leads to hydrolysis of ATP in three separate catalytic sites on the beta subunits. This Hemicentrotus pulcherrimus (Sea urchin) protein is ATP synthase subunit beta, mitochondrial.